The following is a 185-amino-acid chain: Ribosome-recycling factor (185 aa).

Belongs to the RRF family.

The protein resides in the cytoplasm. Responsible for the release of ribosomes from messenger RNA at the termination of protein biosynthesis. May increase the efficiency of translation by recycling ribosomes from one round of translation to another. This Streptococcus thermophilus (strain ATCC BAA-491 / LMD-9) protein is Ribosome-recycling factor.